Consider the following 622-residue polypeptide: DNA-directed RNA polymerase subunit gamma (622 aa).

Cysteine 70, cysteine 72, cysteine 85, and cysteine 88 together coordinate Zn(2+). 3 residues coordinate Mg(2+): aspartate 466, aspartate 468, and aspartate 470.

This sequence belongs to the RNA polymerase beta' chain family. RpoC1 subfamily. In terms of assembly, in cyanobacteria the RNAP catalytic core is composed of 2 alpha, 1 beta, 1 beta', 1 gamma and 1 omega subunit. When a sigma factor is associated with the core the holoenzyme is formed, which can initiate transcription. The cofactor is Mg(2+). Zn(2+) is required as a cofactor.

The catalysed reaction is RNA(n) + a ribonucleoside 5'-triphosphate = RNA(n+1) + diphosphate. In terms of biological role, DNA-dependent RNA polymerase catalyzes the transcription of DNA into RNA using the four ribonucleoside triphosphates as substrates. This chain is DNA-directed RNA polymerase subunit gamma, found in Cyanothece sp. (strain PCC 7425 / ATCC 29141).